The following is a 420-amino-acid chain: FLYWCH transcription factor 3 (420 aa).

A compositionally biased stretch (low complexity) spans 87 to 104 (SSTSPDSQPSSSSSVMSS). 2 disordered regions span residues 87–107 (SSTSPDSQPSSSSSVMSSTDE) and 119–138 (KINKAQRQSSPNSSKPYTPR). Residues 123–134 (AQRQSSPNSSKP) are compositionally biased toward polar residues. The segment at 140–195 (IRERVLFDEHLYVFDKCSYDSKKRFFRCERKNTCPARIHTPFDAERVIHKVQVHNH) adopts an FLYWCH-type zinc-finger fold.

In terms of biological role, probable transcription factor. May bind to the promoters of target genes, including micro-RNA genes, in order to repress expression, and acting redundantly with flh-2. This chain is FLYWCH transcription factor 3, found in Caenorhabditis elegans.